Consider the following 180-residue polypeptide: Nudix hydrolase 16, mitochondrial (180 aa).

Residues 18-162 form the Nudix hydrolase domain; the sequence is GSRLVAGCIP…WMKDALVEGF (145 aa). Residue F60 participates in substrate binding. Mn(2+) contacts are provided by G63, E78, E82, and E144. A Nudix box motif is present at residues 63-84; that stretch reads GGWENDETVREAAAREAVEEAG.

The protein belongs to the Nudix hydrolase family. Requires Mg(2+) as cofactor. Mn(2+) serves as cofactor. In terms of tissue distribution, expressed in roots, leaves, stems and inflorescences.

It localises to the mitochondrion. Probably mediates the hydrolysis of some nucleoside diphosphate derivatives. The polypeptide is Nudix hydrolase 16, mitochondrial (NUDT16) (Arabidopsis thaliana (Mouse-ear cress)).